Here is a 178-residue protein sequence, read N- to C-terminus: Relaxin-like protein SQ10 (178 aa).

The first 20 residues, 1 to 20 (MPALLFYLLGFCLLQGQVTG), serve as a signal peptide directing secretion. Intrachain disulfides connect cysteine 34-cysteine 165, cysteine 46-cysteine 178, and cysteine 164-cysteine 169. Positions 54–150 (ESPSPENPFL…SSASESNTFS (97 aa)) are cleaved as a propeptide — connecting peptide.

It belongs to the insulin family. Heterodimer of a B chain and an A chain linked by two disulfide bonds.

It is found in the secreted. The chain is Relaxin-like protein SQ10 from Oryctolagus cuniculus (Rabbit).